Consider the following 151-residue polypeptide: UPF0208 membrane protein NT01EI_2692 (151 aa).

The next 2 membrane-spanning stretches (helical) occupy residues 46 to 65 (FAIR…QIAL) and 69 to 91 (LGPA…WWLG).

It belongs to the UPF0208 family.

It localises to the cell inner membrane. The chain is UPF0208 membrane protein NT01EI_2692 from Edwardsiella ictaluri (strain 93-146).